Consider the following 196-residue polypeptide: DnaA initiator-associating protein DiaA (196 aa).

Residues 34–196 (LVQSLLNGNK…DNTLFPHQDD (163 aa)) form the SIS domain.

It belongs to the SIS family. DiaA subfamily. Homotetramer; dimer of dimers.

Required for the timely initiation of chromosomal replication via direct interactions with the DnaA initiator protein. This Shigella flexneri serotype 5b (strain 8401) protein is DnaA initiator-associating protein DiaA.